The sequence spans 660 residues: Bifunctional polymyxin resistance protein ArnA (660 aa).

A formyltransferase ArnAFT region spans residues 1 to 304 (MKAVIFAYHD…TLGLVAGARL (304 aa)). The Proton donor; for formyltransferase activity role is filled by histidine 104. (6R)-10-formyltetrahydrofolate-binding positions include arginine 114 and 136 to 140 (VKRAD). A dehydrogenase ArnADH region spans residues 314–660 (RRIRVLILGV…RSVDVAERAS (347 aa)). Residues aspartate 347 and 368 to 369 (DI) contribute to the NAD(+) site. UDP-alpha-D-glucuronate-binding positions include alanine 393, tyrosine 398, and 432 to 433 (TS). The active-site Proton acceptor; for decarboxylase activity is the glutamate 434. Residues arginine 460, asparagine 492, 526–535 (KLIDGGQQKR), and tyrosine 613 contribute to the UDP-alpha-D-glucuronate site. Catalysis depends on arginine 619, which acts as the Proton donor; for decarboxylase activity.

The protein in the N-terminal section; belongs to the Fmt family. UDP-L-Ara4N formyltransferase subfamily. In the C-terminal section; belongs to the NAD(P)-dependent epimerase/dehydratase family. UDP-glucuronic acid decarboxylase subfamily. In terms of assembly, homohexamer, formed by a dimer of trimers.

The enzyme catalyses UDP-alpha-D-glucuronate + NAD(+) = UDP-beta-L-threo-pentopyranos-4-ulose + CO2 + NADH. It catalyses the reaction UDP-4-amino-4-deoxy-beta-L-arabinose + (6R)-10-formyltetrahydrofolate = UDP-4-deoxy-4-formamido-beta-L-arabinose + (6S)-5,6,7,8-tetrahydrofolate + H(+). It participates in nucleotide-sugar biosynthesis; UDP-4-deoxy-4-formamido-beta-L-arabinose biosynthesis; UDP-4-deoxy-4-formamido-beta-L-arabinose from UDP-alpha-D-glucuronate: step 1/3. It functions in the pathway nucleotide-sugar biosynthesis; UDP-4-deoxy-4-formamido-beta-L-arabinose biosynthesis; UDP-4-deoxy-4-formamido-beta-L-arabinose from UDP-alpha-D-glucuronate: step 3/3. The protein operates within bacterial outer membrane biogenesis; lipopolysaccharide biosynthesis. Functionally, bifunctional enzyme that catalyzes the oxidative decarboxylation of UDP-glucuronic acid (UDP-GlcUA) to UDP-4-keto-arabinose (UDP-Ara4O) and the addition of a formyl group to UDP-4-amino-4-deoxy-L-arabinose (UDP-L-Ara4N) to form UDP-L-4-formamido-arabinose (UDP-L-Ara4FN). The modified arabinose is attached to lipid A and is required for resistance to polymyxin and cationic antimicrobial peptides. The protein is Bifunctional polymyxin resistance protein ArnA of Salmonella enteritidis PT4 (strain P125109).